The following is a 304-amino-acid chain: Uricase (304 aa).

The residue at position 2 (alanine 2) is an N-acetylalanine. N6-acetyllysine; alternate is present on residues lysine 10 and lysine 23. N6-succinyllysine; alternate occurs at positions 10 and 23. The active-site Charge relay system is lysine 23. An N6-acetyllysine mark is found at lysine 27 and lysine 36. A phosphoserine mark is found at serine 39 and serine 63. Catalysis depends on threonine 68, which acts as the Charge relay system. Urate contacts are provided by threonine 68 and aspartate 69. N6-acetyllysine occurs at positions 118, 122, and 164. Phenylalanine 170 contacts urate. An N6-acetyllysine mark is found at lysine 175 and lysine 185. Arginine 187 lines the urate pocket. Residues lysine 221 and lysine 228 each carry the N6-acetyllysine; alternate modification. 2 positions are modified to N6-succinyllysine; alternate: lysine 221 and lysine 228. Position 232 is a phosphoserine (serine 232). Residues valine 235, glutamine 236, and asparagine 262 each contribute to the urate site. Catalysis depends on histidine 264, which acts as the Charge relay system. Lysine 278 carries the post-translational modification N6-acetyllysine. Residue tyrosine 289 is modified to Phosphotyrosine. Positions serine 302–leucine 304 match the Microbody targeting signal motif.

This sequence belongs to the uricase family.

The protein resides in the peroxisome. The catalysed reaction is urate + O2 + H2O = 5-hydroxyisourate + H2O2. The protein operates within purine metabolism; urate degradation; (S)-allantoin from urate: step 1/3. In terms of biological role, catalyzes the oxidation of uric acid to 5-hydroxyisourate, which is further processed to form (S)-allantoin. The sequence is that of Uricase (UOX) from Macaca mulatta (Rhesus macaque).